Reading from the N-terminus, the 433-residue chain is Enolase (433 aa).

Residue glutamine 167 participates in (2R)-2-phosphoglycerate binding. Catalysis depends on glutamate 209, which acts as the Proton donor. Mg(2+) is bound by residues aspartate 246, glutamate 291, and aspartate 318. The (2R)-2-phosphoglycerate site is built by lysine 343, arginine 372, serine 373, and lysine 394. The active-site Proton acceptor is the lysine 343.

The protein belongs to the enolase family. Component of the RNA degradosome, a multiprotein complex involved in RNA processing and mRNA degradation. Mg(2+) is required as a cofactor.

Its subcellular location is the cytoplasm. It is found in the secreted. The protein resides in the cell surface. It catalyses the reaction (2R)-2-phosphoglycerate = phosphoenolpyruvate + H2O. The protein operates within carbohydrate degradation; glycolysis; pyruvate from D-glyceraldehyde 3-phosphate: step 4/5. Catalyzes the reversible conversion of 2-phosphoglycerate (2-PG) into phosphoenolpyruvate (PEP). It is essential for the degradation of carbohydrates via glycolysis. This Haemophilus ducreyi (strain 35000HP / ATCC 700724) protein is Enolase.